The following is a 785-amino-acid chain: Conserved oligomeric Golgi complex subunit 4 (785 aa).

A disordered region spans residues 1–24; sequence MADLDSPPKLSGVQQPSEGVGGGR. Ala-2 bears the N-acetylalanine mark. The segment at 2-84 is interaction with SCFD1; it reads ADLDSPPKLS…VTLHRMGPNL (83 aa). Ser-6 carries the phosphoserine modification. The interval 85–153 is interaction with STX5; that stretch reads QLIEGDAKQL…TALRSEDYEQ (69 aa). A d domain region spans residues 618 to 740; sequence PQVQPWINSF…SQMATILNLE (123 aa). The segment at 741 to 785 is e domain; essential for proper cell surface glycosylation; that stretch reads RVTEILDYWGPNSGPLTWRLTPAEVRQVLALRIDFRSEDIKRLRL.

This sequence belongs to the COG4 family. In terms of assembly, monomer. Component of the conserved oligomeric Golgi (COG) complex which is composed of eight different subunits and is required for normal Golgi morphology and localization. Mediates interaction of SCFD1 with the COG complex. Interacts with STX5.

It localises to the cytoplasm. It is found in the cytosol. Its subcellular location is the golgi apparatus membrane. Functionally, required for normal Golgi function. Plays a role in SNARE-pin assembly and Golgi-to-ER retrograde transport via its interaction with SCFD1. The sequence is that of Conserved oligomeric Golgi complex subunit 4 (COG4) from Homo sapiens (Human).